A 355-amino-acid chain; its full sequence is Holliday junction branch migration complex subunit RuvB (355 aa).

Residues 4–195 (TDKLTGADRL…FGIVARLEFY (192 aa)) form a large ATPase domain (RuvB-L) region. ATP-binding positions include Leu34, Arg35, Gly76, Lys79, Thr80, Thr81, 142–144 (EDY), Arg185, Tyr195, and Arg232. Mg(2+) is bound at residue Thr80. A small ATPAse domain (RuvB-S) region spans residues 196–266 (TPDELARIVA…LADAALEMLD (71 aa)). The interval 269–355 (SVGFDLMDRK…DGGADLAEGL (87 aa)) is head domain (RuvB-H). 3 residues coordinate DNA: Arg305, Arg324, and Arg329.

Belongs to the RuvB family. Homohexamer. Forms an RuvA(8)-RuvB(12)-Holliday junction (HJ) complex. HJ DNA is sandwiched between 2 RuvA tetramers; dsDNA enters through RuvA and exits via RuvB. An RuvB hexamer assembles on each DNA strand where it exits the tetramer. Each RuvB hexamer is contacted by two RuvA subunits (via domain III) on 2 adjacent RuvB subunits; this complex drives branch migration. In the full resolvosome a probable DNA-RuvA(4)-RuvB(12)-RuvC(2) complex forms which resolves the HJ.

Its subcellular location is the cytoplasm. The catalysed reaction is ATP + H2O = ADP + phosphate + H(+). Its function is as follows. The RuvA-RuvB-RuvC complex processes Holliday junction (HJ) DNA during genetic recombination and DNA repair, while the RuvA-RuvB complex plays an important role in the rescue of blocked DNA replication forks via replication fork reversal (RFR). RuvA specifically binds to HJ cruciform DNA, conferring on it an open structure. The RuvB hexamer acts as an ATP-dependent pump, pulling dsDNA into and through the RuvAB complex. RuvB forms 2 homohexamers on either side of HJ DNA bound by 1 or 2 RuvA tetramers; 4 subunits per hexamer contact DNA at a time. Coordinated motions by a converter formed by DNA-disengaged RuvB subunits stimulates ATP hydrolysis and nucleotide exchange. Immobilization of the converter enables RuvB to convert the ATP-contained energy into a lever motion, pulling 2 nucleotides of DNA out of the RuvA tetramer per ATP hydrolyzed, thus driving DNA branch migration. The RuvB motors rotate together with the DNA substrate, which together with the progressing nucleotide cycle form the mechanistic basis for DNA recombination by continuous HJ branch migration. Branch migration allows RuvC to scan DNA until it finds its consensus sequence, where it cleaves and resolves cruciform DNA. The sequence is that of Holliday junction branch migration complex subunit RuvB from Cupriavidus metallidurans (strain ATCC 43123 / DSM 2839 / NBRC 102507 / CH34) (Ralstonia metallidurans).